Reading from the N-terminus, the 209-residue chain is Uridine kinase (209 aa).

Residue 12–19 participates in ATP binding; the sequence is GGSASGKT.

This sequence belongs to the uridine kinase family.

Its subcellular location is the cytoplasm. The enzyme catalyses uridine + ATP = UMP + ADP + H(+). It catalyses the reaction cytidine + ATP = CMP + ADP + H(+). It functions in the pathway pyrimidine metabolism; CTP biosynthesis via salvage pathway; CTP from cytidine: step 1/3. Its pathway is pyrimidine metabolism; UMP biosynthesis via salvage pathway; UMP from uridine: step 1/1. This is Uridine kinase from Chloroflexus aggregans (strain MD-66 / DSM 9485).